We begin with the raw amino-acid sequence, 366 residues long: Anhydro-N-acetylmuramic acid kinase (366 aa).

Residue 12-19 (GTSMDGAD) participates in ATP binding.

This sequence belongs to the anhydro-N-acetylmuramic acid kinase family.

It carries out the reaction 1,6-anhydro-N-acetyl-beta-muramate + ATP + H2O = N-acetyl-D-muramate 6-phosphate + ADP + H(+). It participates in amino-sugar metabolism; 1,6-anhydro-N-acetylmuramate degradation. The protein operates within cell wall biogenesis; peptidoglycan recycling. In terms of biological role, catalyzes the specific phosphorylation of 1,6-anhydro-N-acetylmuramic acid (anhMurNAc) with the simultaneous cleavage of the 1,6-anhydro ring, generating MurNAc-6-P. Is required for the utilization of anhMurNAc either imported from the medium or derived from its own cell wall murein, and thus plays a role in cell wall recycling. This chain is Anhydro-N-acetylmuramic acid kinase, found in Neisseria meningitidis serogroup C (strain 053442).